Consider the following 885-residue polypeptide: Rho GTPase-activating protein gacFF (885 aa).

The span at 168 to 182 (TTTNNSNNSNSNNNN) shows a compositional bias: low complexity. Residues 168–187 (TTTNNSNNSNSNNNNKQYNS) form a disordered region. The stretch at 222 to 249 (LINKIQNDSEQLKLVLSQVEQQIEFLKS) forms a coiled coil. In terms of domain architecture, F-box spans 348–394 (SDIFSLLPTHLTLYVFSYLEPKELLILAQVSSQWQKLAGDNLLWVRF). The PH domain occupies 464–571 (SSSKEGWLYK…WMILLNSIIK (108 aa)). Composition is skewed to low complexity over residues 594–622 (NNVY…NNNN) and 629–648 (LPPL…SSTG). The interval 594 to 680 (NNVYINNNNN…GGGSGGNNNF (87 aa)) is disordered. The Rho-GAP domain occupies 701-885 (VALSKILENQ…KYYDEIFIKK (185 aa)).

The protein resides in the cytoplasm. Its function is as follows. Rho GTPase-activating protein involved in the signal transduction pathway. This Dictyostelium discoideum (Social amoeba) protein is Rho GTPase-activating protein gacFF (gacFF).